Here is a 488-residue protein sequence, read N- to C-terminus: Glutamyl-tRNA(Gln) amidotransferase subunit A (488 aa).

Active-site charge relay system residues include K77 and S152. S176 (acyl-ester intermediate) is an active-site residue.

Belongs to the amidase family. GatA subfamily. Heterotrimer of A, B and C subunits.

The enzyme catalyses L-glutamyl-tRNA(Gln) + L-glutamine + ATP + H2O = L-glutaminyl-tRNA(Gln) + L-glutamate + ADP + phosphate + H(+). Its function is as follows. Allows the formation of correctly charged Gln-tRNA(Gln) through the transamidation of misacylated Glu-tRNA(Gln) in organisms which lack glutaminyl-tRNA synthetase. The reaction takes place in the presence of glutamine and ATP through an activated gamma-phospho-Glu-tRNA(Gln). The sequence is that of Glutamyl-tRNA(Gln) amidotransferase subunit A from Latilactobacillus sakei subsp. sakei (strain 23K) (Lactobacillus sakei subsp. sakei).